A 192-amino-acid chain; its full sequence is Adenylate kinase (192 aa).

10–15 contributes to the ATP binding site; that stretch reads GAGKGT. The segment at 30-59 is NMP; sequence STGDMLRAAVAQATEVGKRAKAVMDAGQLV. Residues T31, R36, 57-59, 85-88, and Q92 each bind AMP; these read QLV and GYPR. The LID stretch occupies residues 126-142; it reads NRVAETVAAGGTVRSDD. R127 lines the ATP pocket. R139 and R150 together coordinate AMP. A178 contributes to the ATP binding site.

This sequence belongs to the adenylate kinase family. As to quaternary structure, monomer.

It localises to the cytoplasm. It carries out the reaction AMP + ATP = 2 ADP. Its pathway is purine metabolism; AMP biosynthesis via salvage pathway; AMP from ADP: step 1/1. Catalyzes the reversible transfer of the terminal phosphate group between ATP and AMP. Plays an important role in cellular energy homeostasis and in adenine nucleotide metabolism. The polypeptide is Adenylate kinase (Sinorhizobium medicae (strain WSM419) (Ensifer medicae)).